The chain runs to 456 residues: Heme sensor protein HssS (456 aa).

2 consecutive transmembrane segments (helical) span residues 9–29 and 164–184; these read IAIY…LFAN and TFLA…VIAS. The region spanning 186 to 238 is the HAMP domain; sequence YSIIKPIKILKQATERLMHGDFNSPIYQSRHDEIGTLQYRFEAMRQSLKQVDD. The Histidine kinase domain occupies 246-456; sequence NVSHEIKTPL…TFTVTLPETN (211 aa). His249 is modified (phosphohistidine; by autocatalysis).

Post-translationally, autophosphorylated.

Its subcellular location is the cell membrane. The catalysed reaction is ATP + protein L-histidine = ADP + protein N-phospho-L-histidine.. In terms of biological role, member of the two-component regulatory system HssS/HssR involved in intracellular heme homeostasis and tempering of staphylococcal virulence. HssS functions as a heme sensor histidine kinase which is autophosphorylated at a histidine residue and transfers its phosphate group to an aspartate residue of HssR. HssR/HssS activates the expression of hrtAB, an efflux pump, in response to extracellular heme, hemin, hemoglobin or blood. The chain is Heme sensor protein HssS (hssS) from Staphylococcus haemolyticus (strain JCSC1435).